The chain runs to 353 residues: tRNA pseudouridine synthase B (353 aa).

Catalysis depends on aspartate 39, which acts as the Nucleophile.

Belongs to the pseudouridine synthase TruB family. Type 1 subfamily.

The catalysed reaction is uridine(55) in tRNA = pseudouridine(55) in tRNA. In terms of biological role, responsible for synthesis of pseudouridine from uracil-55 in the psi GC loop of transfer RNAs. The chain is tRNA pseudouridine synthase B from Wolbachia pipientis subsp. Culex pipiens (strain wPip).